The primary structure comprises 379 residues: Queuine tRNA-ribosyltransferase (379 aa).

Catalysis depends on aspartate 94, which acts as the Proton acceptor. Residues 94-98, aspartate 148, glutamine 191, and glycine 218 contribute to the substrate site; that span reads DSGGF. Residues 249 to 255 are RNA binding; it reads GVGSPDS. Residue aspartate 268 is the Nucleophile of the active site. Residues 273–277 are RNA binding; important for wobble base 34 recognition; the sequence is TRIGR. Zn(2+) contacts are provided by cysteine 306, cysteine 308, cysteine 311, and histidine 337.

The protein belongs to the queuine tRNA-ribosyltransferase family. In terms of assembly, homodimer. Within each dimer, one monomer is responsible for RNA recognition and catalysis, while the other monomer binds to the replacement base PreQ1. Requires Zn(2+) as cofactor.

It catalyses the reaction 7-aminomethyl-7-carbaguanine + guanosine(34) in tRNA = 7-aminomethyl-7-carbaguanosine(34) in tRNA + guanine. The protein operates within tRNA modification; tRNA-queuosine biosynthesis. Functionally, catalyzes the base-exchange of a guanine (G) residue with the queuine precursor 7-aminomethyl-7-deazaguanine (PreQ1) at position 34 (anticodon wobble position) in tRNAs with GU(N) anticodons (tRNA-Asp, -Asn, -His and -Tyr). Catalysis occurs through a double-displacement mechanism. The nucleophile active site attacks the C1' of nucleotide 34 to detach the guanine base from the RNA, forming a covalent enzyme-RNA intermediate. The proton acceptor active site deprotonates the incoming PreQ1, allowing a nucleophilic attack on the C1' of the ribose to form the product. After dissociation, two additional enzymatic reactions on the tRNA convert PreQ1 to queuine (Q), resulting in the hypermodified nucleoside queuosine (7-(((4,5-cis-dihydroxy-2-cyclopenten-1-yl)amino)methyl)-7-deazaguanosine). The sequence is that of Queuine tRNA-ribosyltransferase from Anoxybacillus flavithermus (strain DSM 21510 / WK1).